The following is a 220-amino-acid chain: UPF0441 protein Spro_4274 (220 aa).

The disordered stretch occupies residues 181-220; it reads MAPKPAVTNTVTRGGFGESVAKQTSMQRSSATSSSRSMGG. The span at 203–220 shows a compositional bias: low complexity; that stretch reads QTSMQRSSATSSSRSMGG.

This sequence belongs to the UPF0441 family.

In Serratia proteamaculans (strain 568), this protein is UPF0441 protein Spro_4274.